The sequence spans 297 residues: Signal-transducing adaptor protein 1 (297 aa).

Residues 25–121 (PLYFEGFLLV…WRGFILTVTE (97 aa)) enclose the PH domain. The residue at position 170 (Tyr-170) is a Phosphotyrosine. One can recognise an SH2 domain in the interval 179-273 (ECFYAVSRKE…GNLRPFIHSA (95 aa)). The interval 271–297 (HSADDNFGQDPNIEDRSEKFKKNPHNA) is disordered.

As to quaternary structure, interacts with URI1; the interaction is phosphorylation-dependent occurs in a growth-dependent manner. Interacts with KIT and CSF1R. In terms of processing, phosphorylated on tyrosine by TEC. Phosphorylated on tyrosine by KIT. In terms of tissue distribution, expression restricted to the bone marrow.

The protein resides in the nucleus. It is found in the cytoplasm. The protein localises to the mitochondrion. Its function is as follows. May function as an adapter molecule downstream of KIT in the proliferation or differentiation of hematopoietic stem cells. This chain is Signal-transducing adaptor protein 1 (Stap1), found in Mus musculus (Mouse).